A 251-amino-acid chain; its full sequence is Octanoyltransferase (251 aa).

Residues 56-237 (ADTGDEIWVV…RLIANLDGES (182 aa)) form the BPL/LPL catalytic domain. Residues 96–103 (RGGQITYH), 168–170 (ALG), and 181–183 (GLS) contribute to the substrate site. The Acyl-thioester intermediate role is filled by Cys199.

Belongs to the LipB family.

The protein resides in the cytoplasm. The catalysed reaction is octanoyl-[ACP] + L-lysyl-[protein] = N(6)-octanoyl-L-lysyl-[protein] + holo-[ACP] + H(+). It participates in protein modification; protein lipoylation via endogenous pathway; protein N(6)-(lipoyl)lysine from octanoyl-[acyl-carrier-protein]: step 1/2. Catalyzes the transfer of endogenously produced octanoic acid from octanoyl-acyl-carrier-protein onto the lipoyl domains of lipoate-dependent enzymes. Lipoyl-ACP can also act as a substrate although octanoyl-ACP is likely to be the physiological substrate. The protein is Octanoyltransferase of Burkholderia ambifaria (strain ATCC BAA-244 / DSM 16087 / CCUG 44356 / LMG 19182 / AMMD) (Burkholderia cepacia (strain AMMD)).